Here is a 71-residue protein sequence, read N- to C-terminus: Cell division protein ZapB (71 aa).

The stretch at 5-67 (LEVLEQLESK…RALLGKMEQM (63 aa)) forms a coiled coil.

Belongs to the ZapB family. Homodimer. The ends of the coiled-coil dimer bind to each other, forming polymers. Interacts with FtsZ.

Its subcellular location is the cytoplasm. Its function is as follows. Non-essential, abundant cell division factor that is required for proper Z-ring formation. It is recruited early to the divisome by direct interaction with FtsZ, stimulating Z-ring assembly and thereby promoting cell division earlier in the cell cycle. Its recruitment to the Z-ring requires functional FtsA or ZipA. The polypeptide is Cell division protein ZapB (Aeromonas salmonicida (strain A449)).